Here is a 320-residue protein sequence, read N- to C-terminus: Methionyl-tRNA formyltransferase (320 aa).

114 to 117 (SLLP) contributes to the (6S)-5,6,7,8-tetrahydrofolate binding site.

The protein belongs to the Fmt family.

The catalysed reaction is L-methionyl-tRNA(fMet) + (6R)-10-formyltetrahydrofolate = N-formyl-L-methionyl-tRNA(fMet) + (6S)-5,6,7,8-tetrahydrofolate + H(+). In terms of biological role, attaches a formyl group to the free amino group of methionyl-tRNA(fMet). The formyl group appears to play a dual role in the initiator identity of N-formylmethionyl-tRNA by promoting its recognition by IF2 and preventing the misappropriation of this tRNA by the elongation apparatus. This Acinetobacter baumannii (strain AB0057) protein is Methionyl-tRNA formyltransferase.